Consider the following 105-residue polypeptide: uncharacterized protein (105 aa).

The segment at 58 to 105 is disordered; it reads YRKKKPNHSRDNPRINSNLSTNYAQAKSVERSRSNSLNSGPNPLENAT. Composition is skewed to polar residues over residues 71-82 and 91-105; these read RINSNLSTNYAQ and SNSL…ENAT.

It is found in the mitochondrion. This is an uncharacterized protein from Arabidopsis thaliana (Mouse-ear cress).